The chain runs to 420 residues: Glucose-1-phosphate adenylyltransferase (420 aa).

Alpha-D-glucose 1-phosphate contacts are provided by residues Y107, G172, E187–K188, and S205.

This sequence belongs to the bacterial/plant glucose-1-phosphate adenylyltransferase family. Homotetramer.

The catalysed reaction is alpha-D-glucose 1-phosphate + ATP + H(+) = ADP-alpha-D-glucose + diphosphate. It participates in glycan biosynthesis; glycogen biosynthesis. Its function is as follows. Involved in the biosynthesis of ADP-glucose, a building block required for the elongation reactions to produce glycogen. Catalyzes the reaction between ATP and alpha-D-glucose 1-phosphate (G1P) to produce pyrophosphate and ADP-Glc. In Rhizobium etli (strain ATCC 51251 / DSM 11541 / JCM 21823 / NBRC 15573 / CFN 42), this protein is Glucose-1-phosphate adenylyltransferase.